Reading from the N-terminus, the 543-residue chain is CTP synthase (543 aa).

The tract at residues 1 to 267 (MKQTKYIFVT…LSPIAEILDL (267 aa)) is amidoligase domain. Ser15 provides a ligand contact to CTP. Ser15 is a UTP binding site. ATP contacts are provided by residues 16 to 21 (SLGKGI) and Asp73. Positions 73 and 141 each coordinate Mg(2+). CTP-binding positions include 148–150 (DIE), 188–193 (KTKPTQ), and Lys224. Residues 188–193 (KTKPTQ) and Lys224 contribute to the UTP site. The Glutamine amidotransferase type-1 domain maps to 292–543 (KIAFVGKYVD…IKAAINYEDN (252 aa)). Gly354 serves as a coordination point for L-glutamine. Cys381 acts as the Nucleophile; for glutamine hydrolysis in catalysis. Residues 382 to 385 (LGMQ), Glu405, and Arg473 each bind L-glutamine. Active-site residues include His516 and Glu518.

This sequence belongs to the CTP synthase family. As to quaternary structure, homotetramer.

It catalyses the reaction UTP + L-glutamine + ATP + H2O = CTP + L-glutamate + ADP + phosphate + 2 H(+). It carries out the reaction L-glutamine + H2O = L-glutamate + NH4(+). The enzyme catalyses UTP + NH4(+) + ATP = CTP + ADP + phosphate + 2 H(+). It participates in pyrimidine metabolism; CTP biosynthesis via de novo pathway; CTP from UDP: step 2/2. Its activity is regulated as follows. Allosterically activated by GTP, when glutamine is the substrate; GTP has no effect on the reaction when ammonia is the substrate. The allosteric effector GTP functions by stabilizing the protein conformation that binds the tetrahedral intermediate(s) formed during glutamine hydrolysis. Inhibited by the product CTP, via allosteric rather than competitive inhibition. Its function is as follows. Catalyzes the ATP-dependent amination of UTP to CTP with either L-glutamine or ammonia as the source of nitrogen. Regulates intracellular CTP levels through interactions with the four ribonucleotide triphosphates. This Campylobacter jejuni subsp. jejuni serotype O:2 (strain ATCC 700819 / NCTC 11168) protein is CTP synthase.